The sequence spans 344 residues: Cathepsin B-like cysteine proteinase 5 (344 aa).

Residues 1–15 (MWKLSAILLVAAASA) form the signal peptide. The propeptide occupies 16–81 (VVIPGHREAP…DIVATEVSDA (66 aa)). Cystine bridges form between C95–C124, C107–C154, C143–C213, C144–C150, C183–C217, and C191–C203. C110 is a catalytic residue. Residues H286 and N306 contribute to the active site.

This sequence belongs to the peptidase C1 family.

The protein is Cathepsin B-like cysteine proteinase 5 (cpr-5) of Caenorhabditis elegans.